Consider the following 228-residue polypeptide: MPNWGQVMFQDAASSVMLQLVSFHDHALLVLTLVLTVVGYALLALMLNKQVNRYIMEAQTVETIWTILPALILLVLALPSLRILYITDEVSQPSITVKTIGHQWYWSYEYTDFLNVEMDSYMLPTSDLLPGDYRLLEVDNRMVVPMQLEIRMLITAADVIHSWTVPALGVKVDAVPGRLNQIGFTTTQPGVFYGQCSEICGANHSFMPIAVEAINTKSFMSWVSNFKP.

Residues 1–26 (MPNWGQVMFQDAASSVMLQLVSFHDH) lie on the Mitochondrial intermembrane side of the membrane. A helical transmembrane segment spans residues 27–47 (ALLVLTLVLTVVGYALLALML). The Mitochondrial matrix portion of the chain corresponds to 48–60 (NKQVNRYIMEAQT). A helical transmembrane segment spans residues 61–81 (VETIWTILPALILLVLALPSL). Residues 82–228 (RILYITDEVS…FMSWVSNFKP (147 aa)) are Mitochondrial intermembrane-facing. Residues His161, Cys196, Glu198, Cys200, His204, and Met207 each coordinate Cu cation. Position 198 (Glu198) interacts with Mg(2+).

It belongs to the cytochrome c oxidase subunit 2 family. In terms of assembly, component of the cytochrome c oxidase (complex IV, CIV), a multisubunit enzyme composed of a catalytic core of 3 subunits and several supernumerary subunits. The complex exists as a monomer or a dimer and forms supercomplexes (SCs) in the inner mitochondrial membrane with ubiquinol-cytochrome c oxidoreductase (cytochrome b-c1 complex, complex III, CIII). Cu cation serves as cofactor.

It localises to the mitochondrion inner membrane. The enzyme catalyses 4 Fe(II)-[cytochrome c] + O2 + 8 H(+)(in) = 4 Fe(III)-[cytochrome c] + 2 H2O + 4 H(+)(out). Functionally, component of the cytochrome c oxidase, the last enzyme in the mitochondrial electron transport chain which drives oxidative phosphorylation. The respiratory chain contains 3 multisubunit complexes succinate dehydrogenase (complex II, CII), ubiquinol-cytochrome c oxidoreductase (cytochrome b-c1 complex, complex III, CIII) and cytochrome c oxidase (complex IV, CIV), that cooperate to transfer electrons derived from NADH and succinate to molecular oxygen, creating an electrochemical gradient over the inner membrane that drives transmembrane transport and the ATP synthase. Cytochrome c oxidase is the component of the respiratory chain that catalyzes the reduction of oxygen to water. Electrons originating from reduced cytochrome c in the intermembrane space (IMS) are transferred via the dinuclear copper A center (CU(A)) of subunit 2 and heme A of subunit 1 to the active site in subunit 1, a binuclear center (BNC) formed by heme A3 and copper B (CU(B)). The BNC reduces molecular oxygen to 2 water molecules using 4 electrons from cytochrome c in the IMS and 4 protons from the mitochondrial matrix. The protein is Cytochrome c oxidase subunit 2 (COII) of Lumbricus terrestris (Common earthworm).